We begin with the raw amino-acid sequence, 150 residues long: Geranyl diphosphate phosphohydrolase (150 aa).

Residues 14-147 (SIKVAVVVCL…DNVVQDGFNP (134 aa)) form the Nudix hydrolase domain. A Nudix box motif is present at residues 48 to 69 (GHLEFGESFEECAARELKEETD). The Mg(2+) site is built by E63 and E67.

Belongs to the Nudix hydrolase family. In terms of tissue distribution, expressed in petals. Little or no expression in stamens, sepals or young leaves.

The protein localises to the cytoplasm. It carries out the reaction (2E)-geranyl diphosphate + H2O = (2E)-geranyl phosphate + phosphate + H(+). Functionally, involved in a cytosolic pathway for the biosynthesis of free monoterpene alcohols that contribute to fragrance. Lacks terpene synthase activity, but has a diphosphohydrolase activity with geranyl diphosphate and farnesyl diphosphate as substrates. No activity with 8-oxo-dGTP and dGTP and unable to dephosphorylate geranyl phosphate to geraniol. The chain is Geranyl diphosphate phosphohydrolase from Rosa hybrid cultivar.